The following is an 889-amino-acid chain: DNA mismatch repair protein MutS (889 aa).

Low complexity predominate over residues 1 to 17; it reads MPKTNSSAASTNANPSS. Residues 1–20 form a disordered region; sequence MPKTNSSAASTNANPSSLQQ. ATP is bound at residue 640 to 647; sequence GPNMGGKS.

This sequence belongs to the DNA mismatch repair MutS family.

Its function is as follows. This protein is involved in the repair of mismatches in DNA. It is possible that it carries out the mismatch recognition step. This protein has a weak ATPase activity. The protein is DNA mismatch repair protein MutS of Pseudoalteromonas atlantica (strain T6c / ATCC BAA-1087).